A 312-amino-acid polypeptide reads, in one-letter code: Phospholipid phosphatase 3 (312 aa).

The Cytoplasmic segment spans residues 1-33 (MQSYKYDKAIVPESKNGGSPALNNNPRKGGSKR). S19 is subject to Phosphoserine. The helical transmembrane segment at 34–54 (VLLICLDLFCLFMAALPFLII) threads the bilayer. Residues 55–85 (ETSTIKPYRRGFYCNDESIKYPLKVSETIND) lie on the Extracellular side of the membrane. The helical transmembrane segment at 86–106 (AVLCAVGIVIAILRIITGEFY) threads the bilayer. The Cytoplasmic portion of the chain corresponds to 107–123 (RIYYLKEKSRSTIQNPY). The Dityrosine basolateral targeting motif signature appears at 109–110 (YY). Residues 124–144 (VAALYKQVGCFLFGCAISQSF) traverse the membrane as a helical segment. At 145 to 194 (TDIAKVSIGRLRPHFLSVCDPDFSQINCSEGYIQNYRCRGEDSKVQEARK) the chain is on the extracellular side. The phosphatase sequence motif I stretch occupies residues 149–157 (KVSIGRLRP). N-linked (GlcNAc...) asparagine glycosylation is present at N171. Residues 183–185 (RGE) carry the Integrin-binding motif motif. Residues 195 to 215 (SFFSGHASFSMFTMLYLVLYL) form a helical membrane-spanning segment. The segment at 197–200 (FSGH) is phosphatase sequence motif II. The active-site Proton donors is H200. Residues 216–226 (QARFTWRGARL) are Cytoplasmic-facing. A helical membrane pass occupies residues 227-244 (LRPLLQFTLLMMAFYTGL). The tract at residues 245-256 (SRVSDYKHHPSD) is phosphatase sequence motif III. Residues 245-258 (SRVSDYKHHPSDVL) are Extracellular-facing. The active-site Nucleophile is the H252. Residues 259–279 (AGFAQGALVACCIVFFVSDLF) traverse the membrane as a helical segment. The tract at residues 276-312 (SDLFKTKTTLSLPAPAIRREILSPVDIMDRSNHHNMV) is mediates interaction with CTNND1. Residues 280 to 312 (KTKTTLSLPAPAIRREILSPVDIMDRSNHHNMV) lie on the Cytoplasmic side of the membrane.

This sequence belongs to the PA-phosphatase related phosphoesterase family. As to quaternary structure, forms functional homodimers and homooligomers that are not required for substrate recognition and catalytic activity. Can also form heterooligomers with other PLPP2 and PLPP3. Interacts with CTNND1; negatively regulates the PLPP3-mediated stabilization of beta-catenin/CTNNB1. Post-translationally, N-glycosylated. Contains high-mannose oligosaccharides. In terms of tissue distribution, detected in epithelial cells of intestinal mucosa, lung, liver and brain.

The protein localises to the cell membrane. It is found in the basolateral cell membrane. Its subcellular location is the endoplasmic reticulum membrane. It localises to the endoplasmic reticulum-Golgi intermediate compartment membrane. The protein resides in the golgi apparatus membrane. The protein localises to the golgi apparatus. It is found in the trans-Golgi network membrane. Its subcellular location is the membrane raft. The catalysed reaction is a 1,2-diacyl-sn-glycero-3-phosphate + H2O = a 1,2-diacyl-sn-glycerol + phosphate. It carries out the reaction 1,2-dihexadecanoyl-sn-glycero-3-phosphate + H2O = 1,2-dihexadecanoyl-sn-glycerol + phosphate. The enzyme catalyses 1,2-di-(9Z-octadecenoyl)-sn-glycero-3-phosphate + H2O = 1,2-di-(9Z-octadecenoyl)-sn-glycerol + phosphate. It catalyses the reaction a monoacyl-sn-glycero-3-phosphate + H2O = a monoacylglycerol + phosphate. The catalysed reaction is (9Z)-octadecenoyl-sn-glycero-3-phosphate + H2O = (9Z-octadecenoyl)-glycerol + phosphate. It carries out the reaction sphing-4-enine 1-phosphate + H2O = sphing-4-enine + phosphate. The enzyme catalyses an N-acylsphing-4-enine 1-phosphate + H2O = an N-acylsphing-4-enine + phosphate. It catalyses the reaction N-(octanoyl)-sphing-4-enine-1-phosphate + H2O = N-octanoylsphing-4-enine + phosphate. The catalysed reaction is N-(9Z-octadecenoyl)-ethanolamine phosphate + H2O = N-(9Z-octadecenoyl) ethanolamine + phosphate. The protein operates within lipid metabolism; phospholipid metabolism. Its activity is regulated as follows. Magnesium-independent phospholipid phosphatase. Insensitive to N-ethylmaleimide. Inhibited by sphingosine, zinc ions and modestly by propanolol. Its function is as follows. Magnesium-independent phospholipid phosphatase of the plasma membrane that catalyzes the dephosphorylation of a variety of glycerolipid and sphingolipid phosphate esters including phosphatidate/PA, lysophosphatidate/LPA, diacylglycerol pyrophosphate/DGPP, sphingosine 1-phosphate/S1P and ceramide 1-phosphate/C1P. Also acts on N-oleoyl ethanolamine phosphate/N-(9Z-octadecenoyl)-ethanolamine phosphate, a potential physiological compound. Has both an extracellular and an intracellular phosphatase activity, allowing the hydrolysis and the cellular uptake of these bioactive lipid mediators from the milieu, regulating signal transduction in different cellular processes. Through the dephosphorylation of extracellular sphingosine-1-phosphate and the regulation of its extra- and intracellular availability, plays a role in vascular homeostasis, regulating endothelial cell migration, adhesion, survival, proliferation and the production of pro-inflammatory cytokines. By maintaining the appropriate levels of this lipid in the cerebellum, also ensure its proper development and function. Through its intracellular lipid phosphatase activity may act in early compartments of the secretory pathway, regulating the formation of Golgi to endoplasmic reticulum retrograde transport carriers. Independently of this phosphatase activity may also function in the Wnt signaling pathway and the stabilization of beta-catenin/CTNNB1, thereby regulating cell proliferation, migration and differentiation in angiogenesis or yet in tumor growth. Also plays a role in integrin-mediated cell-cell adhesion in angiogenesis. The protein is Phospholipid phosphatase 3 of Rattus norvegicus (Rat).